The chain runs to 151 residues: Shadow of prion protein (151 aa).

An N-terminal signal peptide occupies residues 1-24 (MNWAPATCWALLLAAAFLCDSGAA). Residues 89-113 (WRRAAGPGERGLEDEEDGVPGGNGT) form a disordered region. A glycan (N-linked (GlcNAc...) asparagine) is linked at Asn-111. A lipid anchor (GPI-anchor amidated glycine) is attached at Gly-126. Positions 127-151 (AGPTRGPRLCLVLGGALGALGLLRP) are cleaved as a propeptide — removed in mature form.

This sequence belongs to the SPRN family. N-glycosylated. As to expression, mainly expressed in brain. In brain, it is expressed in hippocampus.

The protein localises to the cell membrane. Its function is as follows. Prion-like protein that has PrP(C)-like neuroprotective activity. May act as a modulator for the biological actions of normal and abnormal PrP. In Homo sapiens (Human), this protein is Shadow of prion protein (SPRN).